The sequence spans 214 residues: Small ribosomal subunit protein uS5 (214 aa).

Residues 54 to 117 enclose the S5 DRBM domain; the sequence is LRYDIVDIGI…RDAKMRIIPV (64 aa).

It belongs to the universal ribosomal protein uS5 family. As to quaternary structure, part of the 30S ribosomal subunit. Contacts protein S4.

With S4 and S12 plays an important role in translational accuracy. This Sulfolobus acidocaldarius (strain ATCC 33909 / DSM 639 / JCM 8929 / NBRC 15157 / NCIMB 11770) protein is Small ribosomal subunit protein uS5.